A 511-amino-acid polypeptide reads, in one-letter code: MRWISRPGWPGHLLALAAGALTPLALAPFDYWPLAILSIALLYLGLRGLPGKSALWRGWWYGFGAFGAGTSWIYVSIHDYGAASVPLASLLMLGFTAGVAFFFALPAWLWARCLRRDNAPLGDALAFAALWLALELFRSWFLTGFPWLYAGYSQLQGPLAGLVPVGGVWLSSFVIALSAALLVNLPRLFPHGASLLLGLVLLLGPWAAGLYLKGHAWTHSAGEPLRVVAIQGNIAQELKWDPNQVRAQLDLYRDLSLPQQDVDLIVWPETAVPILQDMASGYLGAMGQVADEKNAALITGVPVRERLTDGKSRYFNGITVVGEGAGTYLKQKLVPFGEYVPLQDLLRGLIAFFDLPMSDFARGPADQPLLKAKGYEIAPYICYEVVYPEFAAALAAQSQVLLTVSNDTWFGTSIGPLQHLQMAQMRALESGRWMIRATNNGVTGLIDPYGRIVRQIPQFQQGILRGEVIPMQGLTPYLQYRVWPLAGLAGVLLLWALLGRQLRPQERRLFG.

6 helical membrane passes run 7 to 29 (PGWP…LAPF), 58 to 78 (GWWY…VSIH), 90 to 110 (LLML…AWLW), 125 to 145 (LAFA…LTGF), 163 to 183 (VPVG…ALLV), and 192 to 212 (GASL…GLYL). A CN hydrolase domain is found at 230–470 (IQGNIAQELK…QGILRGEVIP (241 aa)). Glu269 (proton acceptor) is an active-site residue. Residue Lys330 is part of the active site. Cys382 functions as the Nucleophile in the catalytic mechanism. The helical transmembrane segment at 482–502 (VWPLAGLAGVLLLWALLGRQL) threads the bilayer.

It belongs to the CN hydrolase family. Apolipoprotein N-acyltransferase subfamily.

The protein resides in the cell inner membrane. The catalysed reaction is N-terminal S-1,2-diacyl-sn-glyceryl-L-cysteinyl-[lipoprotein] + a glycerophospholipid = N-acyl-S-1,2-diacyl-sn-glyceryl-L-cysteinyl-[lipoprotein] + a 2-acyl-sn-glycero-3-phospholipid + H(+). Its pathway is protein modification; lipoprotein biosynthesis (N-acyl transfer). Its function is as follows. Catalyzes the phospholipid dependent N-acylation of the N-terminal cysteine of apolipoprotein, the last step in lipoprotein maturation. This chain is Apolipoprotein N-acyltransferase, found in Pseudomonas aeruginosa (strain LESB58).